A 750-amino-acid chain; its full sequence is MEGPEIQFSEAIIDNGRFGKRVIRFETGRLAKQAAGASMVYIDEDTALLSATTAGKQPREGFDFFPLTVDVEERMYAAGRIPGSFFRREGRPSTEAILACRLMDRPLRPAFVKGLRNEVQIVVTVLAINPDELYDVVAINASSMSTQLSGLPFSGPIGGVRVALIADEQGSQWVAFPKHSQLENAVFNMVVAGRIAGDDVAIMMVEAEATDNSWNLIKEQGATAPTEEVVSEGLEAAKPFIKALCEAQADLAARAAKPTVEFPVFLDYQDDVYAAVEAAAADKLAAVFQIADKQDRDNASDELKDEVLGALAGQFEGREKELSAAFRSVTKHVVRQRILKDQVRIDGRGLTDIRQLTAEVEVLPRVHGSAIFERGETQIMGVTTLNMLKMEQQIDSLSPVTRKRYMHNYNFPPYSTGETGRVGSPKRREIGHGALAERALVPVLPTREEFPYAIRQVSEALGSNGSTSMGSVCASTLSMLNAGVPLKAAVAGIAMGLVSDQVDGQTRYAALTDILGAEDAFGDMDFKVAGTSEFVTAIQLDTKLDGIPASVLAAALKQAREARLHILEVINAAIDTPDELSEFAPRVIAVKIPVDKIGEVIGPKGKMINQIQEDTGADISIEDDGTVYIGATNGPSADAARSAINAIANPQVPEIGERYLGTVVKTTTFGAFVSLTPGKDGLLHISELRKLANGKRVDNVDDVVSVGQKVQVEITKIDDRGKLSLSPVVAEEEGAASEDAPAEAAEESAE.

Mg(2+)-binding residues include D519 and D525. A KH domain is found at 585-644; sequence PRVIAVKIPVDKIGEVIGPKGKMINQIQEDTGADISIEDDGTVYIGATNGPSADAARSAI. The S1 motif domain occupies 656 to 728; that stretch reads GERYLGTVVK…DRGKLSLSPV (73 aa). The segment at 725–750 is disordered; sequence LSPVVAEEEGAASEDAPAEAAEESAE. Over residues 730 to 750 the composition is skewed to acidic residues; it reads AEEEGAASEDAPAEAAEESAE.

Belongs to the polyribonucleotide nucleotidyltransferase family. Requires Mg(2+) as cofactor.

It is found in the cytoplasm. The enzyme catalyses RNA(n+1) + phosphate = RNA(n) + a ribonucleoside 5'-diphosphate. Functionally, involved in mRNA degradation. Catalyzes the phosphorolysis of single-stranded polyribonucleotides processively in the 3'- to 5'-direction. The protein is Polyribonucleotide nucleotidyltransferase of Paenarthrobacter aurescens (strain TC1).